We begin with the raw amino-acid sequence, 341 residues long: Cyclic GMP-AMP synthase (341 aa).

An ATP-binding site is contributed by Ser56. Active-site residues include Asp71 and Asp73. Asp73 is a binding site for Mg(2+). Asn109 provides a ligand contact to ATP. The active site involves Asp123. Residue Asp123 participates in Mg(2+) binding. Leu192 and Asp238 together coordinate ATP.

The protein belongs to the CD-NTase family. B04 subfamily. Monomer. Mg(2+) is required as a cofactor.

The enzyme catalyses GTP + ATP = 3',3'-cGAMP + 2 diphosphate. Cyclic nucleotide synthase (second messenger synthase) of a CBASS antivirus system. CBASS (cyclic oligonucleotide-based antiphage signaling system) provides immunity against bacteriophage. The CD-NTase protein synthesizes cyclic nucleotides in response to infection; these serve as specific second messenger signals. The signals activate a diverse range of effectors, leading to bacterial cell death and thus abortive phage infection. A type II-A(GA) CBASS system. Functionally, catalyzes the synthesis of 3'3'-cyclic GMP-AMP (3'3'-cGAMP) from GTP and ATP, a second messenger in cell signal transduction. May make another product. Controls the activity of the CBASS cGAMP-activated phospholipase effector protein. This Bacteroides fragilis protein is Cyclic GMP-AMP synthase.